The following is a 340-amino-acid chain: 4-dimethylallyltryptophan N-methyltransferase ifgB (340 aa).

Belongs to the methyltransferase superfamily. Homodimer.

The enzyme catalyses 4-(3-methylbut-2-enyl)-L-tryptophan + S-adenosyl-L-methionine = 4-(3-methylbut-2-enyl)-L-abrine + S-adenosyl-L-homocysteine + H(+). It participates in alkaloid biosynthesis; ergot alkaloid biosynthesis. Its function is as follows. 4-dimethylallyltryptophan N-methyltransferase; part of the gene cluster that mediates the biosynthesis of isofumigaclavines, fungal ergot alkaloids. The tryptophan dimethylallyltransferase ifgA catalyzes the first step of ergot alkaloid biosynthesis by condensing dimethylallyl diphosphate (DMAP) and tryptophan to form 4-dimethylallyl-L-tryptophan. The second step is catalyzed by the methyltransferase ifgB that methylates 4-dimethylallyl-L-tryptophan in the presence of S-adenosyl-L-methionine, resulting in the formation of N-methyl-dimethylallyl-L-tryptophan. The catalase ifgD and the FAD-dependent oxidoreductase ifgC then transform N-methyl-dimethylallyl-L-tryptophan to chanoclavine-I which is further oxidized by ifgE in the presence of NAD(+), resulting in the formation of chanoclavine-I aldehyde. The chanoclavine-I aldehyde reductases ifgG and/or fgaOx3 reduce chanoclavine-I aldehyde to dihydrochanoclavine-I aldehyde that spontaneously dehydrates to form 6,8-dimethyl-6,7-didehydroergoline. The festuclavine dehydrogenases ifgF1 and/or ifgF2 then catalyze the reduction of 6,8-dimethyl-6,7-didehydroergoline to form festuclavine. Hydrolysis of festuclavine by a yet undetermined cytochrome P450 monooxygenase (called ifgH) then leads to the formation of isofumigaclavine B which is in turn acetylated by ifgI to isofumigaclavine A. Penicillium roqueforti has interestingly at least two sets of genes for the consumption of chanoclavine-I aldehyde on three different loci, the OYEs ifgG/fgaOx3 and the festuclavine synthase homologs ifgF1/ifgF2. The reason for the duplication of these genes is unclear, probably to ensure the conversion of chanoclavine-I aldehyde by differential gene expression under various environmental conditions. This chain is 4-dimethylallyltryptophan N-methyltransferase ifgB, found in Penicillium roqueforti (strain FM164).